We begin with the raw amino-acid sequence, 426 residues long: Branched-chain amino acid permease BrnQ (426 aa).

A run of 12 helical transmembrane segments spans residues 11–31 (LMLFSMFFGAGNLIFPPMLGL), 41–61 (ILGFLATSVLLPVLAIIAVVL), 76–96 (IFGLVFPIAAYLSIGAFYALP), 111–131 (NALYSGLFNFVFFAVALALSW), 140–160 (LGKWLTPALLTLIVVLVVLSV), 186–206 (GYMTMDAIAALAFGIVVISAF), 219–239 (VVSAFIAGILLALVYLGLGSI), 268–288 (IMFVAILILACMTTAVGLISA), 296–316 (LLPGVKYHVWATVFALISFGV), 324–344 (VLAVAAPVISFIYPSAITLVF), 358–378 (TYLFGIWTAVVWALFMSIPAL), and 390–410 (MSLGWVVPVLVASAIGLAIDW).

Belongs to the branched chain amino acid transporter family.

The protein localises to the cell membrane. Its function is as follows. Branched chain amino acid transport system, which transports isoleucine. The chain is Branched-chain amino acid permease BrnQ from Corynebacterium glutamicum (strain ATCC 13032 / DSM 20300 / JCM 1318 / BCRC 11384 / CCUG 27702 / LMG 3730 / NBRC 12168 / NCIMB 10025 / NRRL B-2784 / 534).